The primary structure comprises 106 residues: Urease subunit beta (106 aa).

Belongs to the urease beta subunit family. In terms of assembly, heterotrimer of UreA (gamma), UreB (beta) and UreC (alpha) subunits. Three heterotrimers associate to form the active enzyme.

The protein localises to the cytoplasm. It carries out the reaction urea + 2 H2O + H(+) = hydrogencarbonate + 2 NH4(+). The protein operates within nitrogen metabolism; urea degradation; CO(2) and NH(3) from urea (urease route): step 1/1. This chain is Urease subunit beta, found in Prochlorococcus marinus subsp. pastoris (strain CCMP1986 / NIES-2087 / MED4).